The following is a 95-amino-acid chain: UPF0235 protein AnaeK_1146 (95 aa).

It belongs to the UPF0235 family.

The sequence is that of UPF0235 protein AnaeK_1146 from Anaeromyxobacter sp. (strain K).